We begin with the raw amino-acid sequence, 382 residues long: Mannitol-1-phosphate 5-dehydrogenase (382 aa).

3–14 (AIHFGAGNIGRG) contributes to the NAD(+) binding site.

This sequence belongs to the mannitol dehydrogenase family.

The catalysed reaction is D-mannitol 1-phosphate + NAD(+) = beta-D-fructose 6-phosphate + NADH + H(+). The sequence is that of Mannitol-1-phosphate 5-dehydrogenase from Psychromonas ingrahamii (strain DSM 17664 / CCUG 51855 / 37).